Here is a 375-residue protein sequence, read N- to C-terminus: MSTAGKVIKCKAAVLWEPHKPFSIEDIEVAPPKAHEVRIKMVATGVCRSDDHVVSRSLASPLPAVLGHEGAGIVESVGEGVTSVKPGDKVIPLFTPQCGKCRICKHPEYNLCMKNDLMQPRGTLLDGTSRFTCRGKAIHNFISTSTFSQYTVVDEMAVAKIDGASPLEKVCLIGCGFSTGYGSAVKVAKVTPGSTCAVFGLGGVGLSVIIGCKAAGAARIIAVDINKDKFAKAKELGATECINPLDYSKPIQEVLQEMTDGGVDFSFEVIGRLDTMTSSLLSCHASCGVSVIVGVPPNAQSLSVNPMSLLMGRSWKGAIFGGFKSKDSVPKLVTDFMAKKFPLEPLITHVLPFEKINEAFDLLRAGKSIRTVLTF.

Position 2 is an N-acetylserine (S2). Positions 47, 68, 98, 101, 104, 112, and 175 each coordinate Zn(2+). Residues 200–205 (GLGGVG), D224, and K229 each bind NAD(+). K234 bears the N6-succinyllysine mark. 293–295 (VGV) is a binding site for NAD(+). Position 340 is an N6-succinyllysine (K340). Residue R370 coordinates NAD(+).

Belongs to the zinc-containing alcohol dehydrogenase family. Class-I subfamily. Zn(2+) serves as cofactor.

The protein localises to the cytoplasm. It carries out the reaction a primary alcohol + NAD(+) = an aldehyde + NADH + H(+). The enzyme catalyses a secondary alcohol + NAD(+) = a ketone + NADH + H(+). The polypeptide is Alcohol dehydrogenase 1 (ADH1) (Peromyscus maniculatus (North American deer mouse)).